We begin with the raw amino-acid sequence, 909 residues long: MERAMEQLNRLTRSLRRARTVELPEDNETAVYTLMPMVMADQHRSVSELLSNSKFDVNYAFGRVKRSLLHIAANCGSVECLVLLLKKGANPNYQDISGCTPLHLAARNGQKKCMSKLLEYSADVNICNNEGLTAIHWLAVNGRTELLHDLVQHVSDVDVEDAMGQTALHVACQNGHKTTVQCLLDSGADINRPNVSGATPLYFACSHGQRDTAQILLLRGAKYLPDKNGVTPLDLCVQGGYGETCEVLIQYHPRLFQTIIQMTQNEDLRENMLRQVLEHLSQQSESQYLKILTSLAEVATTNGHKLLSLSSNYDAQMKSLLRIVRMFCHVFRIGPSSPSNGIDMGYNGNKTPRSQVFKPLELLWHSLDEWLVLIATELMKNKRDSTEITSILLKQKGQDQDAASIPPFEPPGPGSYENLSTGTRESKPDALAGRQEASADCQDVISMTANRLSAVIQAFYMCCSCQMPPGMTSPRFIEFVCKHDEVLKCFVNRNPKIIFDHFHFLLECPELMSRFMHIIKAQPFKDRCEWFYEHLHSGQPDSDMVHRPVNENDILLVHRDSIFRSSCEVVSKANCAKLKQGIAVRFHGEEGMGQGVVREWFDILSNEIVNPDYALFTQSADGTTFQPNSNSYVNPDHLNYFRFAGQILGLALNHRQLVNIYFTRSFYKHILGIPVNYQDVASIDPEYAKNLQWILDNDISDLGLELTFSVETDVFGAMEEVPLKPGGGSILVTQNNKAEYVQLVTELRMTRAIQPQINAFLQGFHMFIPPSLIQLFDEYELELLLSGMPEIDVSDWIKNTEYTSGYEREDPVIQWFWEVVEDITQEERVLLLQFVTGSSRVPHGGFANIMGGSGLQNFTIAAVPYTPNLLPTSSTCINMLKLPEYPSKEILKDRLLVALHCGSYGYTMA.

The segment at 1–21 (MERAMEQLNRLTRSLRRARTV) is N-terminal helix important for homodimerization. 7 ANK repeats span residues 23–55 (LPED…NSKF), 64–93 (VKRS…NPNY), 97–126 (SGCT…DVNI), 130–159 (EGLT…DVDV), 163–192 (MGQT…DINR), 196–226 (SGAT…YLPD), and 228–253 (NGVT…QYHP). The tract at residues 398–433 (QDQDAASIPPFEPPGPGSYENLSTGTRESKPDALAG) is disordered. An HECT domain is found at 574–909 (NCAKLKQGIA…HCGSYGYTMA (336 aa)). Cys-876 (glycyl thioester intermediate) is an active-site residue.

In terms of assembly, homodimer. The homodimer is autoinhibited and stabilized by its N-terminal helix. Interacts with RAB1 (RAB1A, RAB1B or RAB1C), RAB4 (RAB4A or RAB4B) and RAB11 (RAB11A or RAB11B); in a GTP-dependent manner. Interacts with the 26S proteasomal complex through the 20S core proteasomal subunit. Interacts with RARB. Autoubiquitinated. In terms of tissue distribution, expressed in multiple tissues including heart, brain and kidney.

It is found in the golgi apparatus. The protein localises to the golgi stack membrane. It localises to the cytoplasm. The protein resides in the endoplasmic reticulum. The enzyme catalyses S-ubiquitinyl-[E2 ubiquitin-conjugating enzyme]-L-cysteine + [acceptor protein]-L-lysine = [E2 ubiquitin-conjugating enzyme]-L-cysteine + N(6)-ubiquitinyl-[acceptor protein]-L-lysine.. Its pathway is protein modification; protein ubiquitination. Sterically autoinhibited in its dimeric state. E3 ubiquitin-protein ligase involved in Golgi membrane fusion and regulation of small GTPases. Acts as a regulator of Golgi membrane dynamics during the cell cycle: recruited to Golgi membrane by Rab proteins and regulates postmitotic Golgi membrane fusion. Acts by mediating ubiquitination during mitotic Golgi disassembly, ubiquitination serving as a signal for Golgi reassembly later, after cell division. Specifically binds GTP-bound RAC1, mediating ubiquitination and subsequent degradation of active RAC1, thereby playing a role in host defense against pathogens. May also act as a transcription regulator via its interaction with RARB. The sequence is that of E3 ubiquitin-protein ligase HACE1 (HACE1) from Homo sapiens (Human).